The following is a 396-amino-acid chain: Phosphoglycerate kinase (396 aa).

Substrate is bound by residues 24–26, R39, 62–65, R120, and R153; these read DFN and HLGR. ATP contacts are provided by residues K203, G294, E325, and 352–355; that span reads GGDS.

Belongs to the phosphoglycerate kinase family. As to quaternary structure, monomer.

The protein localises to the cytoplasm. The catalysed reaction is (2R)-3-phosphoglycerate + ATP = (2R)-3-phospho-glyceroyl phosphate + ADP. It participates in carbohydrate degradation; glycolysis; pyruvate from D-glyceraldehyde 3-phosphate: step 2/5. The chain is Phosphoglycerate kinase from Dictyoglomus turgidum (strain DSM 6724 / Z-1310).